Consider the following 100-residue polypeptide: Small ribosomal subunit protein uS14m (100 aa).

It belongs to the universal ribosomal protein uS14 family.

The protein localises to the mitochondrion. The chain is Small ribosomal subunit protein uS14m (RPS14) from Brassica napus (Rape).